A 252-amino-acid polypeptide reads, in one-letter code: Probable transcriptional regulatory protein Bcav_1989 (252 aa).

It belongs to the TACO1 family.

It is found in the cytoplasm. This is Probable transcriptional regulatory protein Bcav_1989 from Beutenbergia cavernae (strain ATCC BAA-8 / DSM 12333 / CCUG 43141 / JCM 11478 / NBRC 16432 / NCIMB 13614 / HKI 0122).